The primary structure comprises 158 residues: Cyclic pyranopterin monophosphate synthase (158 aa).

Substrate is bound by residues 75 to 77 (LCH) and 113 to 114 (ME). The active site involves Asp-128.

Belongs to the MoaC family. As to quaternary structure, homohexamer; trimer of dimers.

It catalyses the reaction (8S)-3',8-cyclo-7,8-dihydroguanosine 5'-triphosphate = cyclic pyranopterin phosphate + diphosphate. It functions in the pathway cofactor biosynthesis; molybdopterin biosynthesis. In terms of biological role, catalyzes the conversion of (8S)-3',8-cyclo-7,8-dihydroguanosine 5'-triphosphate to cyclic pyranopterin monophosphate (cPMP). The protein is Cyclic pyranopterin monophosphate synthase of Paraburkholderia xenovorans (strain LB400).